A 644-amino-acid chain; its full sequence is Protein cueball (644 aa).

Residues 1–26 (MIRIRFGMDVLLVLLLATCLLSPTHG) form the signal peptide. The Extracellular portion of the chain corresponds to 27–531 (TPLEWDFAVT…VCLTPTVWTS (505 aa)). Asn-82 and Asn-108 each carry an N-linked (GlcNAc...) asparagine glycan. 3 LDL-receptor class B repeats span residues 121–166 (TNLF…DVCR), 167–211 (RKLY…DQLS), and 212–257 (DRLF…TNDA). Residues Asn-175 and Asn-190 are each glycosylated (N-linked (GlcNAc...) asparagine). A glycan (N-linked (GlcNAc...) asparagine) is linked at Asn-313. EGF-like domains are found at residues 398–430 (EIRE…FTGE) and 433–471 (EVSV…ARCE). 5 disulfides stabilise this stretch: Cys-402–Cys-411, Cys-406–Cys-421, Cys-437–Cys-447, Cys-441–Cys-459, and Cys-461–Cys-470. Residues Asn-473 and Asn-508 are each glycosylated (N-linked (GlcNAc...) asparagine). Residues 532-552 (SVIIILVVGIVSSLLLVAVIV) traverse the membrane as a helical segment. Residues 553–644 (HGIRRLYKPK…LIHNMEDDLY (92 aa)) lie on the Cytoplasmic side of the membrane.

It belongs to the cueball family.

The protein localises to the cell membrane. Functionally, has a role in spermatogenesis and oogenesis. This chain is Protein cueball, found in Drosophila yakuba (Fruit fly).